The chain runs to 148 residues: Fibroblast growth factor 1 (148 aa).

Residues 1–11 (EITTFAALTER) constitute a propeptide that is removed on maturation. Heparin is bound at residue N29. The heparin-binding stretch occupies residues 123–139 (KKNGKTKLGSRTHFGQK).

This sequence belongs to the heparin-binding growth factors family.

The protein resides in the secreted. It is found in the cytoplasm. The protein localises to the cell cortex. It localises to the cytosol. Its subcellular location is the nucleus. Functionally, plays an important role in the regulation of cell survival, cell division, angiogenesis, cell differentiation and cell migration. Functions as a potent mitogen in vitro. Acts as a ligand for FGFR1 and integrins. Binds to FGFR1 in the presence of heparin leading to FGFR1 dimerization and activation via sequential autophosphorylation on tyrosine residues which act as docking sites for interacting proteins, leading to the activation of several signaling cascades. Binds to integrins. Its binding to integrins and subsequent ternary complex formation with integrins and FGFR1 are essential for FGF1 signaling. This is Fibroblast growth factor 1 (fgf1) from Cynops pyrrhogaster (Japanese fire-bellied newt).